Reading from the N-terminus, the 559-residue chain is Probable inorganic carbon transporter subunit DabB1 (559 aa).

The next 13 helical transmembrane spans lie at 4–24 (LQWLIPLLPLLSALLVQLFAA), 33–53 (LSVALGTLTVIVAAYQLVAYI), 76–96 (LSSIMSLVVAGISLIVHVYSI), 106–126 (PRFFLLLDLMTASILLMVAAG), 173–193 (LVLAAVLLYQTYGAIDFPTLF), 202–222 (ATIMGLPTAITAAFLVALSAF), 240–260 (GPTPVSALMHAGIVNAGGFII), 273–293 (VLHMLFVVGLITALVGSVLML), 310–330 (MGFMVMECGLGAFSLAVFHLI), 375–395 (LPWLFIGLATLVVPLFILVIA), 408–428 (GAIVLLFFGWITGVQVLFATH), 440–460 (MMILLSFTLIVVGYTFIGHAF), and 487–507 (GLVFLLALIVVAGWFSSYLAS).

The protein belongs to the inorganic carbon transporter (TC 9.A.2) DabB family. As to quaternary structure, forms a complex with DabA1.

It localises to the cell inner membrane. Functionally, part of an energy-coupled inorganic carbon pump. The polypeptide is Probable inorganic carbon transporter subunit DabB1 (Halothiobacillus neapolitanus (strain ATCC 23641 / c2) (Thiobacillus neapolitanus)).